We begin with the raw amino-acid sequence, 507 residues long: Transmembrane protein 184 homolog DDB_G0276041 (507 aa).

A run of 7 helical transmembrane segments spans residues Ile13–Leu33, Ile50–Phe70, Ala88–Leu108, Leu141–Leu161, Leu179–Phe199, Val222–Leu242, and Phe260–Ser280. Asn360, Asn375, Asn470, Asn473, Asn477, and Asn498 each carry an N-linked (GlcNAc...) asparagine glycan. The segment at Asn448–Ser500 is disordered. Residues Ser451–Ser500 show a composition bias toward low complexity.

The protein belongs to the TMEM184 family.

It is found in the cell membrane. Its function is as follows. Probable transporter. The polypeptide is Transmembrane protein 184 homolog DDB_G0276041 (tmem184B) (Dictyostelium discoideum (Social amoeba)).